The sequence spans 359 residues: Guanine nucleotide-binding protein alpha-4 subunit (359 aa).

A lipid anchor (N-myristoyl glycine) is attached at glycine 2. Residue cysteine 3 is the site of S-palmitoyl cysteine attachment. The G-alpha domain maps to 31–359 (TEVKLLLLGA…RYNLKDCGLF (329 aa)). A G1 motif region spans residues 34–47 (KLLLLGAGESGKST). GTP contacts are provided by residues 39–46 (GAGESGKS), 178–184 (LRARVKS), 203–207 (DVGGQ), 272–275 (NKMD), and alanine 331. Mg(2+) is bound at residue serine 46. Residues 176–184 (DILRARVKS) form a G2 motif region. The tract at residues 199 to 208 (FRMFDVGGQR) is G3 motif. The interval 268-275 (ILFLNKMD) is G4 motif. Residues 329-334 (TCATDT) form a G5 motif region.

It belongs to the G-alpha family. G(i/o/t/z) subfamily. G proteins are composed of 3 units; alpha, beta and gamma. The alpha chain contains the guanine nucleotide binding site.

Its function is as follows. Guanine nucleotide-binding proteins (G proteins) are involved as modulators or transducers in various transmembrane signaling systems. This Caenorhabditis briggsae protein is Guanine nucleotide-binding protein alpha-4 subunit (gpa-4).